The sequence spans 172 residues: NADH-quinone oxidoreductase subunit B (172 aa).

Residues Cys42, Cys43, Cys107, and Cys136 each contribute to the [4Fe-4S] cluster site.

This sequence belongs to the complex I 20 kDa subunit family. As to quaternary structure, NDH-1 is composed of 14 different subunits. Subunits NuoB, C, D, E, F, and G constitute the peripheral sector of the complex. It depends on [4Fe-4S] cluster as a cofactor.

It localises to the cell inner membrane. It catalyses the reaction a quinone + NADH + 5 H(+)(in) = a quinol + NAD(+) + 4 H(+)(out). In terms of biological role, NDH-1 shuttles electrons from NADH, via FMN and iron-sulfur (Fe-S) centers, to quinones in the respiratory chain. The immediate electron acceptor for the enzyme in this species is believed to be ubiquinone. Couples the redox reaction to proton translocation (for every two electrons transferred, four hydrogen ions are translocated across the cytoplasmic membrane), and thus conserves the redox energy in a proton gradient. The polypeptide is NADH-quinone oxidoreductase subunit B (Sulfurovum sp. (strain NBC37-1)).